Consider the following 206-residue polypeptide: Holliday junction branch migration complex subunit RuvA (206 aa).

Residues 1–67 (MIASIFGKIT…QILEEGFAFN (67 aa)) are domain I. Residues 68 to 141 (TLEEKEWFSK…YDRDDGGKRI (74 aa)) form a domain II region. Residues 141 to 145 (IKPNT) form a flexible linker region. The domain III stretch occupies residues 146–206 (AMANDYDEMF…QNNEVTNKTA (61 aa)).

Belongs to the RuvA family. In terms of assembly, homotetramer. Forms an RuvA(8)-RuvB(12)-Holliday junction (HJ) complex. HJ DNA is sandwiched between 2 RuvA tetramers; dsDNA enters through RuvA and exits via RuvB. An RuvB hexamer assembles on each DNA strand where it exits the tetramer. Each RuvB hexamer is contacted by two RuvA subunits (via domain III) on 2 adjacent RuvB subunits; this complex drives branch migration. In the full resolvosome a probable DNA-RuvA(4)-RuvB(12)-RuvC(2) complex forms which resolves the HJ.

It is found in the cytoplasm. The RuvA-RuvB-RuvC complex processes Holliday junction (HJ) DNA during genetic recombination and DNA repair, while the RuvA-RuvB complex plays an important role in the rescue of blocked DNA replication forks via replication fork reversal (RFR). RuvA specifically binds to HJ cruciform DNA, conferring on it an open structure. The RuvB hexamer acts as an ATP-dependent pump, pulling dsDNA into and through the RuvAB complex. HJ branch migration allows RuvC to scan DNA until it finds its consensus sequence, where it cleaves and resolves the cruciform DNA. This Mycoplasma pneumoniae (strain ATCC 29342 / M129 / Subtype 1) (Mycoplasmoides pneumoniae) protein is Holliday junction branch migration complex subunit RuvA.